A 280-amino-acid polypeptide reads, in one-letter code: Phospholipase C D (280 aa).

A disordered region spans residues V258–C280.

Belongs to the bacterial phospholipase C family.

It is found in the secreted. The protein localises to the cell wall. The catalysed reaction is a 1,2-diacyl-sn-glycero-3-phosphocholine + H2O = phosphocholine + a 1,2-diacyl-sn-glycerol + H(+). The enzyme catalyses 1,2-dihexadecanoyl-sn-glycero-3-phosphocholine + H2O = 1,2-dihexadecanoyl-sn-glycerol + phosphocholine + H(+). In terms of biological role, involved in virulence. Induces cytotoxic effects on mouse macrophage cell lines, via direct or indirect enzymatic hydrolysis of cell membrane phospholipids. Hydrolyzes phosphatidylcholine. Does not have hemolytic activity. This is Phospholipase C D from Mycobacterium tuberculosis (strain ATCC 25618 / H37Rv).